The chain runs to 158 residues: Phosphopantetheine adenylyltransferase (158 aa).

Serine 8 lines the substrate pocket. ATP is bound by residues 8–9 (SF) and histidine 16. Positions 40, 72, and 86 each coordinate substrate. Residues 87 to 89 (GLR), glutamate 97, and 122 to 128 (HSFLSSS) each bind ATP.

Belongs to the bacterial CoaD family. Homohexamer. Mg(2+) serves as cofactor.

Its subcellular location is the cytoplasm. The enzyme catalyses (R)-4'-phosphopantetheine + ATP + H(+) = 3'-dephospho-CoA + diphosphate. The protein operates within cofactor biosynthesis; coenzyme A biosynthesis; CoA from (R)-pantothenate: step 4/5. Functionally, reversibly transfers an adenylyl group from ATP to 4'-phosphopantetheine, yielding dephospho-CoA (dPCoA) and pyrophosphate. The polypeptide is Phosphopantetheine adenylyltransferase (Prochlorococcus marinus (strain NATL1A)).